Here is a 347-residue protein sequence, read N- to C-terminus: Very-long-chain 3-oxoacyl-CoA reductase (347 aa).

A helical membrane pass occupies residues 20–40; the sequence is LLWVVFGLGVLKCTTLSLRFL. Positions 66, 120, 147, 223, 227, 256, and 258 each coordinate NADP(+). Residue Tyr-223 is the Proton donor of the active site. Lys-227 serves as the catalytic Lowers pKa of active site Tyr.

This sequence belongs to the short-chain dehydrogenases/reductases (SDR) family. As to quaternary structure, interacts with the fatty acid elongation system components ELO3 and TSC13.

It is found in the endoplasmic reticulum membrane. It carries out the reaction a very-long-chain (3R)-3-hydroxyacyl-CoA + NADP(+) = a very-long-chain 3-oxoacyl-CoA + NADPH + H(+). Its pathway is lipid metabolism; fatty acid biosynthesis. In terms of biological role, component of the microsomal membrane bound fatty acid elongation system, which produces the 26-carbon very long-chain fatty acids (VLCFA) from palmitate. Catalyzes the reduction of the 3-ketoacyl-CoA intermediate that is formed in each cycle of fatty acid elongation. VLCFAs serve as precursors for ceramide and sphingolipids. The sequence is that of Very-long-chain 3-oxoacyl-CoA reductase from Saccharomyces cerevisiae (strain RM11-1a) (Baker's yeast).